Reading from the N-terminus, the 336-residue chain is Inositol 2-dehydrogenase (336 aa).

It belongs to the Gfo/Idh/MocA family. In terms of assembly, homotetramer.

The enzyme catalyses myo-inositol + NAD(+) = scyllo-inosose + NADH + H(+). In terms of biological role, involved in the oxidation of myo-inositol (MI) to 2-keto-myo-inositol (2KMI or 2-inosose). The polypeptide is Inositol 2-dehydrogenase (Salmonella agona (strain SL483)).